The following is a 511-amino-acid chain: ATP synthase subunit alpha (511 aa).

170-177 (GDRQTGKT) is an ATP binding site.

Belongs to the ATPase alpha/beta chains family. F-type ATPases have 2 components, CF(1) - the catalytic core - and CF(0) - the membrane proton channel. CF(1) has five subunits: alpha(3), beta(3), gamma(1), delta(1), epsilon(1). CF(0) has three main subunits: a(1), b(2) and c(9-12). The alpha and beta chains form an alternating ring which encloses part of the gamma chain. CF(1) is attached to CF(0) by a central stalk formed by the gamma and epsilon chains, while a peripheral stalk is formed by the delta and b chains.

The protein resides in the cell inner membrane. The catalysed reaction is ATP + H2O + 4 H(+)(in) = ADP + phosphate + 5 H(+)(out). Functionally, produces ATP from ADP in the presence of a proton gradient across the membrane. The alpha chain is a regulatory subunit. The chain is ATP synthase subunit alpha from Pelagibacter ubique (strain HTCC1062).